The sequence spans 354 residues: GTPase Obg (354 aa).

Residues 1-159 form the Obg domain; it reads MKFLDQCKIY…RWIWLRLKLI (159 aa). The OBG-type G domain occupies 160–328; it reads ADVGLVGLPN…LLRAAYKQVR (169 aa). Residues 166-173, 191-195, 213-216, 280-283, and 309-311 contribute to the GTP site; these read GLPNAGKS, FTTLT, DIPG, NKID, and SGV. Ser-173 and Thr-193 together coordinate Mg(2+). Residues 335–345 are compositionally biased toward acidic residues; it reads EEEIDDDEDHV. Residues 335-354 are disordered; that stretch reads EEEIDDDEDHVDETPGGWTP.

This sequence belongs to the TRAFAC class OBG-HflX-like GTPase superfamily. OBG GTPase family. Monomer. Mg(2+) serves as cofactor.

Its subcellular location is the cytoplasm. In terms of biological role, an essential GTPase which binds GTP, GDP and possibly (p)ppGpp with moderate affinity, with high nucleotide exchange rates and a fairly low GTP hydrolysis rate. Plays a role in control of the cell cycle, stress response, ribosome biogenesis and in those bacteria that undergo differentiation, in morphogenesis control. The chain is GTPase Obg from Caulobacter vibrioides (strain ATCC 19089 / CIP 103742 / CB 15) (Caulobacter crescentus).